A 151-amino-acid chain; its full sequence is Small ribosomal subunit protein uS13 (151 aa).

This sequence belongs to the universal ribosomal protein uS13 family. Part of the 30S ribosomal subunit. Forms a loose heterodimer with protein S19. Forms two bridges to the 50S subunit in the 70S ribosome.

Located at the top of the head of the 30S subunit, it contacts several helices of the 16S rRNA. In the 70S ribosome it contacts the 23S rRNA (bridge B1a) and protein L5 of the 50S subunit (bridge B1b), connecting the 2 subunits; these bridges are implicated in subunit movement. This chain is Small ribosomal subunit protein uS13, found in Hyperthermus butylicus (strain DSM 5456 / JCM 9403 / PLM1-5).